Here is a 475-residue protein sequence, read N- to C-terminus: tRNA modification GTPase MnmE (475 aa).

Residues Arg-24, Glu-81, and Lys-124 each coordinate (6S)-5-formyl-5,6,7,8-tetrahydrofolate. The TrmE-type G domain occupies 220–397; the sequence is GLSVVLAGQP…LRKELLRLVG (178 aa). Asn-230 is a K(+) binding site. Residues 230–235, 249–255, 274–277, and 378–380 each bind GTP; these read NVGKSS, TPIAGTT, DTAG, and SAR. Ser-234 is a Mg(2+) binding site. K(+)-binding residues include Thr-249, Ile-251, and Thr-254. Mg(2+) is bound at residue Thr-255. Lys-475 is a (6S)-5-formyl-5,6,7,8-tetrahydrofolate binding site.

Belongs to the TRAFAC class TrmE-Era-EngA-EngB-Septin-like GTPase superfamily. TrmE GTPase family. Homodimer. Heterotetramer of two MnmE and two MnmG subunits. K(+) is required as a cofactor.

It localises to the cytoplasm. Its function is as follows. Exhibits a very high intrinsic GTPase hydrolysis rate. Involved in the addition of a carboxymethylaminomethyl (cmnm) group at the wobble position (U34) of certain tRNAs, forming tRNA-cmnm(5)s(2)U34. The sequence is that of tRNA modification GTPase MnmE from Cupriavidus pinatubonensis (strain JMP 134 / LMG 1197) (Cupriavidus necator (strain JMP 134)).